The sequence spans 65 residues: Large ribosomal subunit protein bL35 (65 aa).

Over residues 1–15 (MPKMKTKKSAAKRFQ) the composition is skewed to basic residues. The disordered stretch occupies residues 1–26 (MPKMKTKKSAAKRFQVRGSGSIKRGQ).

This sequence belongs to the bacterial ribosomal protein bL35 family.

The sequence is that of Large ribosomal subunit protein bL35 from Bordetella avium (strain 197N).